A 382-amino-acid polypeptide reads, in one-letter code: Protein arginine N-methyltransferase PRMT10 (382 aa).

A disordered region spans residues 1–21; it reads MASLPNGAASASAASSAAGGG. Low complexity predominate over residues 7-17; sequence GAASASAASSA. In terms of domain architecture, SAM-dependent MTase PRMT-type spans 28 to 359; it reads EVDFANYFCT…KENHRLMDME (332 aa). Catalysis depends on residues Glu-142 and Glu-151. The interval 189-229 is dimerization arm; sequence ENKMEDLEIAMHDWNLFVEDTESYYGVNMNVLTKAYRAEHE.

It belongs to the class I-like SAM-binding methyltransferase superfamily. Protein arginine N-methyltransferase family. In terms of assembly, ring-like homodimer.

The catalysed reaction is L-arginyl-[protein] + 2 S-adenosyl-L-methionine = N(omega),N(omega)-dimethyl-L-arginyl-[protein] + 2 S-adenosyl-L-homocysteine + 2 H(+). Functionally, methylates (mono and asymmetric dimethylation) the guanidino nitrogens of arginyl residues in some proteins. This chain is Protein arginine N-methyltransferase PRMT10 (PRMT10), found in Oryza sativa subsp. indica (Rice).